The chain runs to 135 residues: ATP synthase epsilon chain (135 aa).

The protein belongs to the ATPase epsilon chain family. F-type ATPases have 2 components, CF(1) - the catalytic core - and CF(0) - the membrane proton channel. CF(1) has five subunits: alpha(3), beta(3), gamma(1), delta(1), epsilon(1). CF(0) has three main subunits: a, b and c.

It is found in the cell inner membrane. Its function is as follows. Produces ATP from ADP in the presence of a proton gradient across the membrane. The polypeptide is ATP synthase epsilon chain (Rhodopseudomonas palustris (strain BisB5)).